Here is a 180-residue protein sequence, read N- to C-terminus: Adenine phosphoribosyltransferase (180 aa).

Ala2 carries the post-translational modification N-acetylalanine. Phosphoserine is present on residues Ser4, Ser15, and Ser30. The residue at position 60 (Tyr60) is a Phosphotyrosine. At Ser66 the chain carries Phosphoserine. N6-acetyllysine is present on Lys114. Thr135 carries the phosphothreonine modification.

The protein belongs to the purine/pyrimidine phosphoribosyltransferase family. As to quaternary structure, homodimer.

The protein resides in the cytoplasm. It carries out the reaction AMP + diphosphate = 5-phospho-alpha-D-ribose 1-diphosphate + adenine. It participates in purine metabolism; AMP biosynthesis via salvage pathway; AMP from adenine: step 1/1. In terms of biological role, catalyzes a salvage reaction resulting in the formation of AMP, that is energically less costly than de novo synthesis. The protein is Adenine phosphoribosyltransferase of Cricetulus griseus (Chinese hamster).